The following is a 540-amino-acid chain: GMP synthase [glutamine-hydrolyzing] (540 aa).

A Glutamine amidotransferase type-1 domain is found at 29–222 (KILIVDFGSQ…VRKVAGLTGD (194 aa)). Cysteine 106 (nucleophile) is an active-site residue. Active-site residues include histidine 196 and glutamate 198. The 193-residue stretch at 223-415 (WTMRAFREEA…LGLPEIFVGR (193 aa)) folds into the GMPS ATP-PPase domain. 250–256 (SGGVDSA) is a binding site for ATP.

Homodimer.

The enzyme catalyses XMP + L-glutamine + ATP + H2O = GMP + L-glutamate + AMP + diphosphate + 2 H(+). It participates in purine metabolism; GMP biosynthesis; GMP from XMP (L-Gln route): step 1/1. Its function is as follows. Catalyzes the synthesis of GMP from XMP. In Rhodopseudomonas palustris (strain HaA2), this protein is GMP synthase [glutamine-hydrolyzing].